A 589-amino-acid polypeptide reads, in one-letter code: Serine/threonine-protein kinase STE7 homolog (589 aa).

Residues 1 to 18 (MTRTTRIDTQEATKHKDL) show a composition bias toward basic and acidic residues. 2 disordered regions span residues 1–162 (MTRT…DPDN) and 185–232 (RQHY…PASS). Residues 24–33 (PLSLSSNPNP) are compositionally biased toward low complexity. Residues 57–69 (VKSTSGSLRSSDM) are compositionally biased toward polar residues. Over residues 92 to 121 (PTASSSATSTPTSNITGSSSASSIQFAQKS) the composition is skewed to low complexity. Polar residues-rich tracts occupy residues 127-136 (IVSQTLSRPS) and 144-162 (SGYS…DPDN). A compositionally biased stretch (basic residues) spans 185–203 (RQHYQNSHHHLPTTNRKRQ). Residues 206–220 (ISSISPTKSSAASSP) show a composition bias toward low complexity. In terms of domain architecture, Protein kinase spans 249–565 (LLTLKQLGSG…QLLEDKEHFF (317 aa)). ATP contacts are provided by residues 255–263 (LGSGNSGSV) and Lys-278. Catalysis depends on Asp-374, which acts as the Proton acceptor. Position 402 is a phosphoserine (Ser-402). Thr-408 bears the Phosphothreonine mark. A disordered region spans residues 473–499 (IAAERNGQNSPSRSRKNKQKGNGYNSY).

Belongs to the protein kinase superfamily. STE Ser/Thr protein kinase family. MAP kinase kinase subfamily.

It carries out the reaction L-seryl-[protein] + ATP = O-phospho-L-seryl-[protein] + ADP + H(+). The catalysed reaction is L-threonyl-[protein] + ATP = O-phospho-L-threonyl-[protein] + ADP + H(+). The enzyme catalyses L-tyrosyl-[protein] + ATP = O-phospho-L-tyrosyl-[protein] + ADP + H(+). The protein is Serine/threonine-protein kinase STE7 homolog (HST7) of Candida albicans (strain WO-1) (Yeast).